A 150-amino-acid polypeptide reads, in one-letter code: D-aminoacyl-tRNA deacylase (150 aa).

The short motif at 136–137 (GP) is the Gly-cisPro motif, important for rejection of L-amino acids element.

Belongs to the DTD family. Homodimer.

It localises to the cytoplasm. It catalyses the reaction glycyl-tRNA(Ala) + H2O = tRNA(Ala) + glycine + H(+). The enzyme catalyses a D-aminoacyl-tRNA + H2O = a tRNA + a D-alpha-amino acid + H(+). Its function is as follows. An aminoacyl-tRNA editing enzyme that deacylates mischarged D-aminoacyl-tRNAs. Also deacylates mischarged glycyl-tRNA(Ala), protecting cells against glycine mischarging by AlaRS. Acts via tRNA-based rather than protein-based catalysis; rejects L-amino acids rather than detecting D-amino acids in the active site. By recycling D-aminoacyl-tRNA to D-amino acids and free tRNA molecules, this enzyme counteracts the toxicity associated with the formation of D-aminoacyl-tRNA entities in vivo and helps enforce protein L-homochirality. The sequence is that of D-aminoacyl-tRNA deacylase from Staphylococcus aureus (strain MRSA252).